The chain runs to 740 residues: Dipeptidyl peptidase family member 6 (740 aa).

Position 1 (Met-1) is a topological domain, cytoplasmic. A helical; Signal-anchor for type II membrane protein transmembrane segment spans residues 2 to 22 (LFLPILILNLLIITHAIDIIP). The Lumenal portion of the chain corresponds to 23–740 (REVLFQDPKY…VMNRIFPVQG (718 aa)). N-linked (GlcNAc...) asparagine glycosylation is found at Asn-108, Asn-308, and Asn-506. Catalysis depends on charge relay system residues Ser-516, Asp-604, and His-636. Cys-535 and Cys-658 are oxidised to a cystine. N-linked (GlcNAc...) asparagine glycosylation is present at Asn-672.

The protein belongs to the peptidase S9B family. DPPIV subfamily.

It localises to the cell membrane. In terms of biological role, removes N-terminal dipeptides sequentially from polypeptides. Essential for control of distal tip cell migration. The protein is Dipeptidyl peptidase family member 6 (dpf-6) of Caenorhabditis elegans.